The primary structure comprises 69 residues: Amphipathic peptide StCT2 (69 aa).

A signal peptide spans 1 to 23; it reads MKTQFAVLIISMILMQMLVQTEA. At Ile37 the chain carries Isoleucine amide. Positions 41-69 are excised as a propeptide; that stretch reads SLRNQDQFDNMFDSDLSDADLKLLDDLFD.

Belongs to the non-disulfide-bridged peptide (NDBP) superfamily. Short antimicrobial peptide (group 4) family. Expressed by the venom gland.

It is found in the secreted. It localises to the target cell membrane. In terms of biological role, antimicrobial peptide that is rapidly bactericidal against Gram-positive bacteria. The protein is Amphipathic peptide StCT2 of Scorpiops tibetanus (Scorpion).